The primary structure comprises 285 residues: Complex I assembly factor TIMMDC1, mitochondrial (285 aa).

The next 4 helical transmembrane spans lie at 80–100 (AAVS…FIYA), 137–159 (RWSW…LTVY), 165–185 (MSHF…NLGV), and 188–208 (LVAG…LLMA). A disordered region spans residues 265-285 (RIEELLSLPRNPSSPHQQSKH). Over residues 274 to 285 (RNPSSPHQQSKH) the composition is skewed to polar residues. Residue S277 is modified to Phosphoserine.

It belongs to the Tim17/Tim22/Tim23 family. Associates with the intermediate 315 kDa subcomplex of incompletely assembled complex I. Interacts with TMEM70.

It localises to the mitochondrion membrane. Its function is as follows. Chaperone protein involved in the assembly of the mitochondrial NADH:ubiquinone oxidoreductase complex (complex I). Participates in constructing the membrane arm of complex I. This is Complex I assembly factor TIMMDC1, mitochondrial from Mus musculus (Mouse).